Here is an 834-residue protein sequence, read N- to C-terminus: MRSYRCWRKVQETIRLYSSSSSSASSLLEFVNADFPSTIGIRGRREFARLLQLRASDDLLHYQNVVHGQIIVWGLELDTYLSNILINLYSRAGGMVYARKVFEKMPERNLVSWSTMVSACNHHGIYEESLVVFLEFWRTRKDSPNEYILSSFIQACSGLDGRGRWMVFQLQSFLVKSGFDRDVYVGTLLIDFYLKDGNIDYARLVFDALPEKSTVTWTTMISGCVKMGRSYVSLQLFYQLMEDNVVPDGYILSTVLSACSILPFLEGGKQIHAHILRYGLEMDASLMNVLIDSYVKCGRVIAAHKLFNGMPNKNIISWTTLLSGYKQNALHKEAMELFTSMSKFGLKPDMYACSSILTSCASLHALGFGTQVHAYTIKANLGNDSYVTNSLIDMYAKCDCLTDARKVFDIFAAADVVLFNAMIEGYSRLGTQWELHEALNIFRDMRFRLIRPSLLTFVSLLRASASLTSLGLSKQIHGLMFKYGLNLDIFAGSALIDVYSNCYCLKDSRLVFDEMKVKDLVIWNSMFAGYVQQSENEEALNLFLELQLSRERPDEFTFANMVTAAGNLASVQLGQEFHCQLLKRGLECNPYITNALLDMYAKCGSPEDAHKAFDSAASRDVVCWNSVISSYANHGEGKKALQMLEKMMSEGIEPNYITFVGVLSACSHAGLVEDGLKQFELMLRFGIEPETEHYVCMVSLLGRAGRLNKARELIEKMPTKPAAIVWRSLLSGCAKAGNVELAEHAAEMAILSDPKDSGSFTMLSNIYASKGMWTEAKKVRERMKVEGVVKEPGRSWIGINKEVHIFLSKDKSHCKANQIYEVLDDLLVQIRGVS.

PPR repeat units lie at residues 78–112, 113–144, 145–181, 182–212, 213–247, 248–282, 283–313, 314–348, 349–383, 384–414, 415–452, 453–487, 488–518, 519–553, 554–588, 589–619, 620–654, 655–689, and 690–720; these read DTYL…NLVS, WSTM…KDSP, NEYI…GFDR, DVYV…LPEK, STVT…NVVP, DGYI…GLEM, DASL…MPNK, NIIS…GLKP, DMYA…NLGN, DSYV…FAAA, DVVL…LIRP, SLLT…GLNL, DIFA…MKVK, DLVI…RERP, DEFT…GLEC, NPYI…AASR, DVVC…GIEP, NYIT…GIEP, and ETEH…MPTK. The segment at 725–800 is type E motif; that stretch reads VWRSLLSGCA…EPGRSWIGIN (76 aa). Residues 801-831 are type E(+) motif; the sequence is KEVHIFLSKDKSHCKANQIYEVLDDLLVQIR.

Belongs to the PPR family. PCMP-E subfamily.

The protein is Pentatricopeptide repeat-containing protein At4g39530 (PCMP-E52) of Arabidopsis thaliana (Mouse-ear cress).